Reading from the N-terminus, the 457-residue chain is D-xylose transporter (457 aa).

The next 10 membrane-spanning stretches (helical) occupy residues 14 to 34 (ALGG…ILFI), 46 to 66 (GWVV…IGPS), 81 to 101 (IIFF…TLII), 104 to 124 (IILG…LAEL), 131 to 151 (GTVS…AYIT), 164 to 184 (WMLG…LILP), 244 to 264 (LIIG…TVLY), 281 to 301 (LLAH…AVAI), 309 to 329 (KIVN…SIGM), and 338 to 358 (AAII…ATWG). Gln-138 provides a ligand contact to beta-D-xylose. Residues 254–255 (QQ) and Asn-260 each bind beta-D-xylose. Positions 362 and 385 each coordinate beta-D-xylose. Transmembrane regions (helical) follow at residues 380–400 (FASV…PSLL) and 402–422 (FFGT…SIWF).

Belongs to the major facilitator superfamily. Sugar transporter (TC 2.A.1.1) family.

The protein localises to the cell membrane. Its activity is regulated as follows. Transport is inhibited by 6-deoxy-D-glucose. Its function is as follows. Uptake of D-xylose across the boundary membrane with the concomitant transport of protons into the cell (symport system). Transport is driven by the proton motive force generated by either malolactic fermentation or by the metabolism of D-glucose. The sequence is that of D-xylose transporter from Levilactobacillus brevis (Lactobacillus brevis).